The chain runs to 283 residues: Acetylglutamate kinase (283 aa).

Residues 64 to 65 (GG), R86, and N179 each bind substrate.

This sequence belongs to the acetylglutamate kinase family. ArgB subfamily.

It is found in the cytoplasm. The catalysed reaction is N-acetyl-L-glutamate + ATP = N-acetyl-L-glutamyl 5-phosphate + ADP. The protein operates within amino-acid biosynthesis; L-arginine biosynthesis; N(2)-acetyl-L-ornithine from L-glutamate: step 2/4. Functionally, catalyzes the ATP-dependent phosphorylation of N-acetyl-L-glutamate. The protein is Acetylglutamate kinase of Campylobacter hominis (strain ATCC BAA-381 / DSM 21671 / CCUG 45161 / LMG 19568 / NCTC 13146 / CH001A).